The sequence spans 173 residues: Protein PLASTID REDOX INSENSITIVE 2, chloroplastic (173 aa).

The N-terminal 55 residues, 1 to 55 (MATRAWVAAAVALNPQLLPLRSCSPTKSVSPAQRSASMGLRLRSGRPCLGKFVCR), are a transit peptide targeting the chloroplast.

It localises to the plastid. Its subcellular location is the chloroplast stroma. The protein resides in the chloroplast nucleoid. Functionally, required for the activity of the plastid-encoded RNA polymerase (PEP) and full expression of genes transcribed by PEP. In Zea mays (Maize), this protein is Protein PLASTID REDOX INSENSITIVE 2, chloroplastic.